The chain runs to 548 residues: Thermostable neutral protease NprT (548 aa).

A signal peptide spans 1–25; sequence MNKRAMLGAIGLAFGLLAAPIGASA. A propeptide spans 26-229 (activation peptide); it reads KGESIVWNEQ…DSRQPGGGQP (204 aa). 4 residues coordinate Ca(2+): Asp289, Asp291, Gln293, and Asp370. His374 is a binding site for Zn(2+). Residue Glu375 is part of the active site. 2 residues coordinate Zn(2+): His378 and Glu398. The Ca(2+) site is built by Glu409, Asn415, Asp417, Glu419, Glu422, Tyr425, Thr426, Val429, and Asp432. The Proton donor role is filled by His463.

It belongs to the peptidase M4 family. The cofactor is Ca(2+). It depends on Zn(2+) as a cofactor.

The protein localises to the secreted. With respect to regulation, its casein hydrolytic activity is inhibited almost completely by a chelating agent (EDTA), whereas neither diisopropyl fluorophosphate nor phenylmethylsulfonyl fluoride inhibit the proteolytic activity in vitro. Functionally, extracellular zinc metalloprotease. The protein is Thermostable neutral protease NprT (nprT) of Geobacillus stearothermophilus (Bacillus stearothermophilus).